Consider the following 111-residue polypeptide: Dynein light chain Tctex-type (111 aa).

Belongs to the dynein light chain Tctex-type family.

It localises to the cytoplasm. Its subcellular location is the cytoskeleton. Functionally, acts as a non-catalytic accessory component of a dynein complex. The chain is Dynein light chain Tctex-type (dlcA) from Dictyostelium discoideum (Social amoeba).